The chain runs to 329 residues: Beta-ketoacyl-[acyl-carrier-protein] synthase III (329 aa).

Catalysis depends on residues C123 and H256. Residues 257–261 (QANIR) form an ACP-binding region. The active site involves N286.

This sequence belongs to the thiolase-like superfamily. FabH family. In terms of assembly, homodimer.

The protein resides in the cytoplasm. It catalyses the reaction malonyl-[ACP] + acetyl-CoA + H(+) = 3-oxobutanoyl-[ACP] + CO2 + CoA. It participates in lipid metabolism; fatty acid biosynthesis. In terms of biological role, catalyzes the condensation reaction of fatty acid synthesis by the addition to an acyl acceptor of two carbons from malonyl-ACP. Catalyzes the first condensation reaction which initiates fatty acid synthesis and may therefore play a role in governing the total rate of fatty acid production. Possesses both acetoacetyl-ACP synthase and acetyl transacylase activities. Its substrate specificity determines the biosynthesis of branched-chain and/or straight-chain of fatty acids. This chain is Beta-ketoacyl-[acyl-carrier-protein] synthase III, found in Burkholderia thailandensis (strain ATCC 700388 / DSM 13276 / CCUG 48851 / CIP 106301 / E264).